Reading from the N-terminus, the 578-residue chain is Putative multidrug export ATP-binding/permease protein SA1683 (578 aa).

At 1–15 (MIKRYLQFVKPYKYR) the chain is on the cytoplasmic side. A helical membrane pass occupies residues 16 to 36 (IFATIIVGIIKFGIPMLIPLL). An ABC transmembrane type-1 domain is found at 16–306 (IFATIIVGII…LVASFTTLTQ (291 aa)). Topologically, residues 37-59 (IKYAIDGVINNHALTTDEKVHHL) are extracellular. A helical transmembrane segment spans residues 60–80 (TIAIGIALFIFVIVRPPIEFI). At 81–138 (RQYLAQWTSNKILYDIRKKLYNHLQALSARFYANNQVGQVISRVINDVEQTKDFILTG) the chain is on the cytoplasmic side. Residues 139-159 (LMNIWLDCITIIIALSIMFFL) form a helical membrane-spanning segment. Over 160-162 (DVK) the chain is Extracellular. A helical transmembrane segment spans residues 163 to 183 (LTLAALFIFPFYILTVYVFFG). At 184 to 244 (RLRKLTRERS…TRALKHTRWN (61 aa)) the chain is on the cytoplasmic side. Residues 245 to 263 (AYSFAAINTVTDIGPIIVI) form a helical membrane-spanning segment. Residues 264 to 269 (GVGAYL) lie on the Extracellular side of the membrane. The helical transmembrane segment at 270 to 287 (AISGSITVGTLAAFVGYL) threads the bilayer. Over 288-578 (ELLFGPLRRL…YEHLYSIQNL (291 aa)) the chain is Cytoplasmic. Positions 340 to 575 (IDIDHVSFQY…QGAYEHLYSI (236 aa)) constitute an ABC transporter domain. 374–381 (GMSGGGKS) contributes to the ATP binding site.

It belongs to the ABC transporter superfamily. Homodimer.

Its subcellular location is the cell membrane. Functionally, may be involved in multidrug export. Transmembrane domains (TMD) form a pore in the cell membrane and the ATP-binding domain (NBD) is responsible for energy generation. The chain is Putative multidrug export ATP-binding/permease protein SA1683 from Staphylococcus aureus (strain N315).